The sequence spans 108 residues: CRISPR-associated endoribonuclease Cas2 (108 aa).

Aspartate 15 contacts Mg(2+).

The protein belongs to the CRISPR-associated endoribonuclease Cas2 protein family. Homodimer, forms a heterotetramer with a Cas1 homodimer. Requires Mg(2+) as cofactor.

CRISPR (clustered regularly interspaced short palindromic repeat), is an adaptive immune system that provides protection against mobile genetic elements (viruses, transposable elements and conjugative plasmids). CRISPR clusters contain sequences complementary to antecedent mobile elements and target invading nucleic acids. CRISPR clusters are transcribed and processed into CRISPR RNA (crRNA). Functions as a ssRNA-specific endoribonuclease. Involved in the integration of spacer DNA into the CRISPR cassette. This Paracidovorax avenae (strain ATCC 19860 / DSM 7227 / CCUG 15838 / JCM 20985 / LMG 2117 / NCPPB 1011) (Acidovorax avenae) protein is CRISPR-associated endoribonuclease Cas2.